An 87-amino-acid chain; its full sequence is Sec-independent protein translocase protein TatA (87 aa).

A helical membrane pass occupies residues 3–23; sequence IFGIGLPEMIVILVVALLIFG. The interval 61-87 is disordered; it reads EGVKVSTSASEPEKVVDVSSATNTNKN.

Belongs to the TatA/E family. As to quaternary structure, forms a complex with TatC.

It localises to the cell inner membrane. Its function is as follows. Part of the twin-arginine translocation (Tat) system that transports large folded proteins containing a characteristic twin-arginine motif in their signal peptide across membranes. TatA could form the protein-conducting channel of the Tat system. The sequence is that of Sec-independent protein translocase protein TatA from Trichodesmium erythraeum (strain IMS101).